A 290-amino-acid chain; its full sequence is Picrinine-N-methytransferase (290 aa).

The segment at 71–80 (MLDVGCGIGG) is SAM motif I. The Vacuolar targeting signal motif lies at 133–139 (DGTFDLV). The segment at 134–142 (GTFDLVFTI) is SAM motif II. The interval 161 to 170 (VAAPGAPIVI) is SAM motif III.

The protein belongs to the class I-like SAM-binding methyltransferase superfamily. gTMT family. In terms of assembly, homodimer. Accumulates in tissues actively synthesizing monoterpenoid indole alkaloids (MIAs) (at protein level). Mainly expressed in young leaves and, to a lower extent, in roots and stems.

Its subcellular location is the vacuole membrane. It catalyses the reaction picrinine + S-adenosyl-L-methionine = ervincine + S-adenosyl-L-homocysteine + H(+). It functions in the pathway alkaloid biosynthesis; vindoline biosynthesis. S-adenosyl-L-methionine-dependent N-methyltransferase involved in the biosynthesis of biologically active monoterpenoid indole alkaloids (MIAs) natural products including vindoline. Catalyzes the conversion of picrinine to N-methylpicrinine (ervincine). Also accepts, with low efficiency, 21-hydroxycyclolochnericine and norajmaline as substrates. The chain is Picrinine-N-methytransferase from Rauvolfia serpentina (Serpentine wood).